The chain runs to 570 residues: Small ribosomal subunit protein uS2c (570 aa).

Residues 1-306 form an N-terminal extension region; sequence MLNKKPPYLI…IKLNPLSTPQ (306 aa). 2 TRAM domains span residues 28–89 and 104–169; these read KLIP…KLIK and ALTP…VATV.

This sequence belongs to the universal ribosomal protein uS2 family.

Its subcellular location is the plastid. It localises to the chloroplast. This is Small ribosomal subunit protein uS2c (rps2-1) from Chlamydomonas reinhardtii (Chlamydomonas smithii).